We begin with the raw amino-acid sequence, 504 residues long: L-carnitine/gamma-butyrobetaine antiporter (504 aa).

A run of 12 helical transmembrane segments spans residues 10–30, 51–71, 92–112, 143–163, 195–215, 231–251, 263–283, 316–336, 347–367, 398–418, 446–466, and 475–495; these read IEPK…WLTV, WGWA…WLVF, IFMM…SIEI, GPLP…FFFV, FYLV…TPLV, LDAI…ACGL, SYLS…SFIM, WTVF…IFLA, LCFG…TVLG, WAAL…CFIA, LLVR…LLAL, and AIIA…LSFI.

The protein belongs to the BCCT transporter (TC 2.A.15) family. CaiT subfamily. Homotrimer.

The protein localises to the cell inner membrane. It carries out the reaction 4-(trimethylamino)butanoate(in) + (R)-carnitine(out) = 4-(trimethylamino)butanoate(out) + (R)-carnitine(in). Its pathway is amine and polyamine metabolism; carnitine metabolism. Catalyzes the exchange of L-carnitine for gamma-butyrobetaine. This is L-carnitine/gamma-butyrobetaine antiporter from Escherichia coli O81 (strain ED1a).